Consider the following 605-residue polypeptide: Lysophospholipase 1 (605 aa).

An N-terminal signal peptide occupies residues 1-17 (MILHHLLILLIINYCVA). The PLA2c domain maps to 30 to 565 (SCPSSQLIRS…ENYCWDGTIY (536 aa)). 7 N-linked (GlcNAc...) asparagine glycosylation sites follow: Asn199, Asn261, Asn399, Asn451, Asn465, Asn492, and Asn573.

Belongs to the lysophospholipase family.

The protein resides in the secreted. It carries out the reaction a 1-acyl-sn-glycero-3-phosphocholine + H2O = sn-glycerol 3-phosphocholine + a fatty acid + H(+). Its function is as follows. Catalyzes the release of fatty acids from lysophospholipids. Phospholipase B may well contribute to pathogenicity by abetting the fungus in damaging and traversing host cell membranes, processes which likely increase the rapidity of disseminated infection. This Candida albicans (strain SC5314 / ATCC MYA-2876) (Yeast) protein is Lysophospholipase 1.